The primary structure comprises 296 residues: Small ribosomal subunit biogenesis GTPase RsgA (296 aa).

One can recognise a CP-type G domain in the interval 63–224; it reads RNQLVRPPVA…IADTPGFSSY (162 aa). Residues 112 to 115 and 167 to 175 each bind GTP; these read SKTD and GQTGAGKST. Residues Cys-248, Cys-253, His-255, and Cys-261 each contribute to the Zn(2+) site.

It belongs to the TRAFAC class YlqF/YawG GTPase family. RsgA subfamily. As to quaternary structure, monomer. Associates with 30S ribosomal subunit, binds 16S rRNA. It depends on Zn(2+) as a cofactor.

The protein localises to the cytoplasm. Its function is as follows. One of several proteins that assist in the late maturation steps of the functional core of the 30S ribosomal subunit. Helps release RbfA from mature subunits. May play a role in the assembly of ribosomal proteins into the subunit. Circularly permuted GTPase that catalyzes slow GTP hydrolysis, GTPase activity is stimulated by the 30S ribosomal subunit. The protein is Small ribosomal subunit biogenesis GTPase RsgA of Limosilactobacillus reuteri (strain DSM 20016) (Lactobacillus reuteri).